Consider the following 231-residue polypeptide: uncharacterized protein (231 aa).

Transmembrane regions (helical) follow at residues 4-24 (YIIY…LQIS), 29-49 (SMIF…LVIG), 58-78 (AGNA…ALPL), 95-115 (TVVI…LLLG), 147-167 (VTAV…YLVL), and 211-231 (LCGI…YFFV).

This sequence belongs to the YohK (E.coli)/YwbG (IPA-22R) (B.subtilis) family.

It localises to the cell membrane. This is an uncharacterized protein from Haemophilus influenzae (strain ATCC 51907 / DSM 11121 / KW20 / Rd).